We begin with the raw amino-acid sequence, 1093 residues long: Semaphorin 5c (1093 aa).

An N-terminal signal peptide occupies residues 1–34 (MNMLILKLPKMFSQLWLLLILSLLTLEGPQPSTG). Asn-48 carries an N-linked (GlcNAc...) asparagine glycan. Positions 50 to 495 (SRYISYQDLM…TDLALTRIPA (446 aa)) constitute a Sema domain. Cystine bridges form between Cys-118–Cys-128 and Cys-146–Cys-155. N-linked (GlcNAc...) asparagine glycans are attached at residues Asn-162, Asn-182, Asn-285, and Asn-295. Intrachain disulfides connect Cys-271–Cys-376 and Cys-296–Cys-338. N-linked (GlcNAc...) asparagine glycosylation occurs at Asn-341. Positions 497 to 546 (HCSRHVSQSSCLNSMDPYCGWNELVERCMPQPQDSSVLQHWHQAPQITCP) constitute a PSI domain. 3 TSP type-1 domains span residues 553–605 (DGGW…TNCT), 607–663 (HGGW…PPCP), and 671–726 (DGGW…QSCQ). A glycan (N-linked (GlcNAc...) asparagine) is linked at Asn-603. Cystine bridges form between Cys-619–Cys-656, Cys-623–Cys-662, Cys-634–Cys-646, Cys-683–Cys-720, Cys-687–Cys-725, and Cys-698–Cys-710. The N-linked (GlcNAc...) asparagine glycan is linked to Asn-745. 3 TSP type-1 domains span residues 794–834 (DSAD…HACP), 850–901 (HGEW…VPCE), and 904–953 (LGWS…NECE). Cystine bridges form between Cys-862/Cys-895, Cys-866/Cys-900, and Cys-877/Cys-885. The helical transmembrane segment at 960–980 (TATLPIVIFVGLLFTVACCLA) threads the bilayer. Asn-998 and Asn-1046 each carry an N-linked (GlcNAc...) asparagine glycan. The tract at residues 1018–1056 (PTKDYYDQRPKRQSSFRMPAKTSNLGNGNGTLNRNNMHQ) is disordered. Over residues 1041 to 1053 (NLGNGNGTLNRNN) the composition is skewed to low complexity.

The protein belongs to the semaphorin family. In terms of tissue distribution, in egg chambers, high levels of expression in the follicle cells, with little to no expression in the germ cells (at protein level). In stage 3 to 7 egg chambers, planar polarized at the basal epithelial surface (at protein level).

It localises to the apical cell membrane. The protein resides in the lateral cell membrane. Its subcellular location is the endosome. Regulates the motility of migrating epithelial cells by providing guidance cues within the migratory environment and may also play a role in development of the olfactory system. May act as a positive axonal guidance cue. Function in neurons is essential for adult survival and is important for climbing behavior. Promotes collective migration of follicular epithelial cells in egg chambers, likely by acting at the leading edge of the basal epithelium cells to provide guidance cues across the cell boundary to the trailing edge of the cell ahead. The transmembrane receptor PlexA on the trailing edge of the cell ahead, appears to transduce this signal to suppress the formation of protrusions. Involved in olfactory avoidance behavior. The chain is Semaphorin 5c from Drosophila melanogaster (Fruit fly).